Here is a 219-residue protein sequence, read N- to C-terminus: Ribosome hibernation promotion factor (219 aa).

This sequence belongs to the HPF/YfiA ribosome-associated protein family. Long HPF subfamily. In terms of assembly, interacts with 100S ribosomes.

The protein localises to the cytoplasm. Functionally, required for dimerization of active 70S ribosomes into 100S ribosomes in stationary phase; 100S ribosomes are translationally inactive and sometimes present during exponential growth. The chain is Ribosome hibernation promotion factor from Mycobacterium tuberculosis (strain ATCC 25618 / H37Rv).